The following is a 293-amino-acid chain: uncharacterized protein (293 aa).

Residues 1-60 (MHITLRQLEVFAEVLKSGSTTQASVMLALSQSAVSAALTDLEGQLGVQLFDRVGKRLVVN) enclose the HTH lysR-type domain. Positions 20 to 39 (TTQASVMLALSQSAVSAALT) form a DNA-binding region, H-T-H motif.

It belongs to the LysR transcriptional regulatory family.

This is an uncharacterized protein from Escherichia coli O157:H7.